Reading from the N-terminus, the 532-residue chain is Probable NAD kinase 1 (532 aa).

A compositionally biased stretch (basic and acidic residues) spans 1-26; the sequence is MSLDELPHKVSDERVNHDTVTSHESE. A disordered region spans residues 1 to 32; that stretch reads MSLDELPHKVSDERVNHDTVTSHESEIGSGSI.

Belongs to the NAD kinase family.

The enzyme catalyses NAD(+) + ATP = ADP + NADP(+) + H(+). The sequence is that of Probable NAD kinase 1 from Oryza sativa subsp. japonica (Rice).